A 317-amino-acid chain; its full sequence is Apolipoprotein E (317 aa).

Residues M1–A18 form the signal peptide. A run of 8 repeats spans residues A79 to S100, P101 to G122, T123 to G144, Q145 to L166, R167 to E188, R189 to A210, T211 to R232, and G233 to E254. The 8 X 22 AA approximate tandem repeats stretch occupies residues A79 to E254. At M142 the chain carries Methionine sulfoxide. Residues H157 to R167 are LDL and other lipoprotein receptors binding. L161–R164 lines the heparin pocket. The tract at residues T209–L289 is lipid-binding and lipoprotein association. O-linked (GalNAc...) threonine glycosylation is present at T211. A heparin-binding site is contributed by G228 to L235. The segment at S265–Q317 is homooligomerization. The interval R277–L289 is specificity for association with VLDL. T310 carries O-linked (GalNAc...) threonine glycosylation.

The protein belongs to the apolipoprotein A1/A4/E family. In terms of assembly, homotetramer. May interact with ABCA1; functionally associated with ABCA1 in the biogenesis of HDLs. May interact with APP/A4 amyloid-beta peptide; the interaction is extremely stable in vitro but its physiological significance is unclear. May interact with MAPT. May interact with MAP2. In the cerebrospinal fluid, interacts with secreted SORL1. Interacts with PMEL; this allows the loading of PMEL luminal fragment on ILVs to induce fibril nucleation. Post-translationally, APOE exists as multiple glycosylated and sialylated glycoforms within cells and in plasma. The extent of glycosylation and sialylation are tissue and context specific. Glycated in plasma VLDL. In terms of processing, phosphorylated by FAM20C in the extracellular medium.

The protein localises to the secreted. It is found in the extracellular space. Its subcellular location is the extracellular matrix. It localises to the extracellular vesicle. The protein resides in the endosome. The protein localises to the multivesicular body. In terms of biological role, APOE is an apolipoprotein, a protein associating with lipid particles, that mainly functions in lipoprotein-mediated lipid transport between organs via the plasma and interstitial fluids. APOE is a core component of plasma lipoproteins and is involved in their production, conversion and clearance. Apolipoproteins are amphipathic molecules that interact both with lipids of the lipoprotein particle core and the aqueous environment of the plasma. As such, APOE associates with chylomicrons, chylomicron remnants, very low density lipoproteins (VLDL) and intermediate density lipoproteins (IDL) but shows a preferential binding to high-density lipoproteins (HDL). It also binds a wide range of cellular receptors including the LDL receptor/LDLR and the very low-density lipoprotein receptor/VLDLR that mediate the cellular uptake of the APOE-containing lipoprotein particles. Finally, APOE also has a heparin-binding activity and binds heparan-sulfate proteoglycans on the surface of cells, a property that supports the capture and the receptor-mediated uptake of APOE-containing lipoproteins by cells. The polypeptide is Apolipoprotein E (APOE) (Camelus dromedarius (Dromedary)).